A 585-amino-acid polypeptide reads, in one-letter code: GRR1-like protein 1 (585 aa).

The 48-residue stretch at 1 to 48 folds into the F-box domain; it reads MGLRFPPKVLEHILSFIDSNEDRNSVSLVCKSWFETERKTRKRVFVGN. 1D-myo-inositol hexakisphosphate is bound at residue Lys-70. Residues 77–78 are interaction with auxin-responsive proteins; that stretch reads DY. 1D-myo-inositol hexakisphosphate contacts are provided by residues 109 to 110 and Arg-340; that span reads KR. The tract at residues 343-348 is interaction with auxin-responsive proteins; sequence PSEPDL. 397–399 is a binding site for 1D-myo-inositol hexakisphosphate; it reads CFR. The tract at residues 401–405 is interaction with auxin-responsive proteins; it reads CVIEP. Position 432 (Arg-432) interacts with 1D-myo-inositol hexakisphosphate. Residues 460–461 are interaction with auxin-responsive proteins; sequence AF. 1D-myo-inositol hexakisphosphate-binding positions include 480-481 and Arg-505; that span reads KK.

Part of a SCF (SKP1-cullin-F-box) protein ligase complex. Interacts with CUL1, SKP1A/ASK1 and SKP1B/ASK2. Interacts with Aux/IAA proteins (IAA7 and IAA12) in an auxin-dependent manner. In terms of tissue distribution, ubiquitous.

It localises to the nucleus. It functions in the pathway protein modification; protein ubiquitination. Component of SCF(ASK-cullin-F-box) E3 ubiquitin ligase complexes, which may mediate the ubiquitination and subsequent proteasomal degradation of target proteins. Auxin receptor that mediates Aux/IAA proteins proteasomal degradation and auxin-regulated transcription. Involved in embryogenesis regulation by auxin. Confers sensitivity to the virulent bacterial pathogen P.syringae. Mediates glucose repression in yeast. The sequence is that of GRR1-like protein 1 (GRH1) from Arabidopsis thaliana (Mouse-ear cress).